Reading from the N-terminus, the 442-residue chain is Putative ammonium transporter sll1017 (442 aa).

Helical transmembrane passes span 5-25 (NFPLARYVLGAMLAFLFVGVA), 44-64 (LFLLAAAVLVLFMQAGFAMLE), 81-101 (TFDVCVGVLLYFLFGYSLMYG), 104-124 (PVLGGFFGWGGFGITNNLDNV), 133-153 (WLFQAAFAATAATIVSGAVMG), 155-175 (MYFKAYLIYSAVITGLVYPIS), 193-213 (FAGSLLVHSVGGFAALAAVVV), 240-260 (GVFILWVGWYGFNPGSQLAFV), 269-289 (MLIAVNTTLSAAAGGLAALAF), 299-319 (PNLLVTLNGILGGLVGITAGC), 325-345 (WSAIAIGVVAGILSVLGTKLL), 354-374 (VGAWPVHGLCGIWGGIAVGIF), and 386-406 (IVGSLVIPFWAFITMFFLFYV).

This sequence belongs to the ammonia transporter channel (TC 1.A.11.2) family.

It is found in the cell membrane. This chain is Putative ammonium transporter sll1017, found in Synechocystis sp. (strain ATCC 27184 / PCC 6803 / Kazusa).